Reading from the N-terminus, the 80-residue chain is 17 kDa surface antigen (80 aa).

Polar residues predominate over residues Ala47–Glu58. The interval Ala47 to Thr80 is disordered.

It belongs to the rickettsiale 17 kDa surface antigen family.

It is found in the cell outer membrane. This chain is 17 kDa surface antigen (omp), found in Rickettsia canadensis.